The chain runs to 247 residues: Uridylate kinase (247 aa).

Residue 14–17 (KLSG) participates in ATP binding. Positions 22-27 (GERGVG) are involved in allosteric activation by GTP. Gly-56 is a binding site for UMP. ATP-binding residues include Gly-57 and Arg-61. Residues Asp-76 and 137–144 (IGSPYFST) each bind UMP. 3 residues coordinate ATP: Asn-165, Tyr-171, and Asp-174.

The protein belongs to the UMP kinase family. As to quaternary structure, homohexamer.

It is found in the cytoplasm. The catalysed reaction is UMP + ATP = UDP + ADP. Its pathway is pyrimidine metabolism; CTP biosynthesis via de novo pathway; UDP from UMP (UMPK route): step 1/1. With respect to regulation, allosterically activated by GTP. Inhibited by UTP, 5-bromo-UTP and 5-iodo-UTP. Its function is as follows. Catalyzes the reversible phosphorylation of UMP to UDP, with ATP as the most efficient phosphate donor. The sequence is that of Uridylate kinase (pyrH) from Streptococcus pneumoniae serotype 4 (strain ATCC BAA-334 / TIGR4).